Reading from the N-terminus, the 476-residue chain is Proline--tRNA ligase (476 aa).

This sequence belongs to the class-II aminoacyl-tRNA synthetase family. ProS type 3 subfamily. As to quaternary structure, homodimer.

The protein localises to the cytoplasm. The catalysed reaction is tRNA(Pro) + L-proline + ATP = L-prolyl-tRNA(Pro) + AMP + diphosphate. Catalyzes the attachment of proline to tRNA(Pro) in a two-step reaction: proline is first activated by ATP to form Pro-AMP and then transferred to the acceptor end of tRNA(Pro). This chain is Proline--tRNA ligase, found in Mycoplasma mobile (strain ATCC 43663 / 163K / NCTC 11711) (Mesomycoplasma mobile).